The sequence spans 670 residues: Neutral ceramidase (670 aa).

The signal sequence occupies residues 1–24 (MSRSAFTALLLSCVLLALSMPARA). Residue H61 coordinates Mg(2+). Residues N84, Q92, and D111 each contribute to the substrate site. Position 121 (H121) interacts with Zn(2+). S130 is a binding site for substrate. H228 is a binding site for Zn(2+). S274 functions as the Nucleophile in the catalytic mechanism. C346 and C394 are disulfide-bonded. A Zn(2+)-binding site is contributed by E435. Substrate is bound at residue Y469. A Zn(2+)-binding site is contributed by Y472. Residues D603, D605, and T608 each coordinate Mg(2+). A required for correct folding and localization region spans residues 644-670 (NAKNFWTQKISEIGGSTRSFEVLGTTP).

The protein belongs to the neutral ceramidase family. Homodimer. Requires Zn(2+) as cofactor. It depends on Mg(2+) as a cofactor.

Its subcellular location is the secreted. It catalyses the reaction an N-acylsphing-4-enine + H2O = sphing-4-enine + a fatty acid. Its activity is regulated as follows. Inhibited by EDTA, EGTA and D/L-sphinganine D-erythro-sphingosine. L-erythro-sphingosine is a less powerful inhibitor. Stimulated by glycerophospholipids: cardiolipin is the most effective, followed by phosphatidic acid, phosphatidylethanolamine and phosphatidylglycerol, whereas phosphatidylcholine, lysophosphatidic acid and diacylglycerol are less effective. Catalyzes the cleavage of the N-acyl linkage of the ceramides (Cers) to yield sphingosine (Sph) and free fatty acid at an optimal pH of 8-9. Also catalyzes the synthesis of Cers from Sph and fatty acid. In Pseudomonas aeruginosa (strain ATCC 15692 / DSM 22644 / CIP 104116 / JCM 14847 / LMG 12228 / 1C / PRS 101 / PAO1), this protein is Neutral ceramidase.